Here is a 330-residue protein sequence, read N- to C-terminus: Cyclin N-terminal domain-containing protein 1 (330 aa).

Positions 27 to 178 (DALLHLAQQN…VLKSLNFRIN (152 aa)) constitute a Cyclin N-terminal domain.

Interacts with PRR19; this interaction promotes crossover formation. Interacts with RFC3 and RFC4; these interactions facilitate crossover formation. Interacts with CDC34; this interaction regulates the cell-cycle progression.

It is found in the nucleus. The protein localises to the cytoplasm. Its subcellular location is the chromosome. Functionally, plays a role in the different steps of crossover formation during meiotic recombination. Participates in the crossover differentiation step of crossover-specific recombination intermediates through its interaction with PRR19. In addition, stimulates crossover formation through the interactions with RFC3 and RFC4 and simultaneously regulates cell-cycle progression through interactions with CDC34 and subsequent ubiquitination of WEE1. May also participates in an active deselection process that destabilizes or removes excess pre-CO intermediates. This Homo sapiens (Human) protein is Cyclin N-terminal domain-containing protein 1.